The sequence spans 59 residues: Protein translocase subunit SecE (59 aa).

A helical transmembrane segment spans residues 33-53 (GAGIALVGLLGFIIFAVMTFV).

It belongs to the SecE/SEC61-gamma family. In terms of assembly, component of the Sec protein translocase complex. Heterotrimer consisting of SecY (alpha), SecG (beta) and SecE (gamma) subunits. The heterotrimers can form oligomers, although 1 heterotrimer is thought to be able to translocate proteins. Interacts with the ribosome. May interact with SecDF, and other proteins may be involved.

It localises to the cell membrane. Functionally, essential subunit of the Sec protein translocation channel SecYEG. Clamps together the 2 halves of SecY. May contact the channel plug during translocation. This is Protein translocase subunit SecE from Haloarcula marismortui (strain ATCC 43049 / DSM 3752 / JCM 8966 / VKM B-1809) (Halobacterium marismortui).